Reading from the N-terminus, the 178-residue chain is Dual-action ribosomal maturation protein DarP (178 aa).

It belongs to the DarP family.

The protein localises to the cytoplasm. Member of a network of 50S ribosomal subunit biogenesis factors which assembles along the 30S-50S interface, preventing incorrect 23S rRNA structures from forming. Promotes peptidyl transferase center (PTC) maturation. This is Dual-action ribosomal maturation protein DarP from Mannheimia succiniciproducens (strain KCTC 0769BP / MBEL55E).